The following is a 56-amino-acid chain: UPF0434 protein CbuG_1535 (56 aa).

Belongs to the UPF0434 family.

This chain is UPF0434 protein CbuG_1535, found in Coxiella burnetii (strain CbuG_Q212) (Coxiella burnetii (strain Q212)).